Consider the following 378-residue polypeptide: Mevalonate kinase (378 aa).

ATP-binding positions include Lys-10, Ser-138, and 143–149 (GSGLGSS). Positions 149 and 193 each coordinate Mg(2+). Asp-204 (proton acceptor) is an active-site residue.

It belongs to the GHMP kinase family. Mevalonate kinase subfamily. Requires Mg(2+) as cofactor.

It is found in the cytoplasm. The catalysed reaction is (R)-mevalonate + ATP = (R)-5-phosphomevalonate + ADP + H(+). It participates in isoprenoid biosynthesis; isopentenyl diphosphate biosynthesis via mevalonate pathway; isopentenyl diphosphate from (R)-mevalonate: step 1/3. With respect to regulation, its activity is inhibited in vitro by geranyl pyrophosphate (GPP) and farnesyl pyrophosphate (FPP) that bind competitively at the ATP-binding site on the enzyme. In terms of biological role, catalyzes the phosphorylation of mevalonate to mevalonate 5-phosphate, a key step in isoprenoid and cholesterol biosynthesis. In Arabidopsis thaliana (Mouse-ear cress), this protein is Mevalonate kinase.